The sequence spans 180 residues: uncharacterized protein (180 aa).

One can recognise a Macro domain in the interval 1–180; it reads MVEFEIVKGD…KDYERALRAV (180 aa).

This is an uncharacterized protein from Thermococcus kodakarensis (strain ATCC BAA-918 / JCM 12380 / KOD1) (Pyrococcus kodakaraensis (strain KOD1)).